The chain runs to 704 residues: Lebercilin (704 aa).

Residues 1–14 (MGERARSPDIEQGK) are compositionally biased toward basic and acidic residues. The interval 1 to 80 (MGERARSPDI…VSPKAVPSKK (80 aa)) is disordered. The residue at position 7 (serine 7) is a Phosphoserine. Residues 25–40 (SSDLGSSPQSSGPSSP) are compositionally biased toward low complexity. Serine 48 is modified (phosphoserine). Residues 49–63 (TREKNPKRHLSDNQV) are compositionally biased toward basic and acidic residues. Residues 105–300 (KRVLSARLLK…KEKELDIKNI (196 aa)) are a coiled coil. Disordered regions lie at residues 389–417 (QEGKYDEDEDPCSAKQEARKPESEWAREE) and 476–661 (ELQD…GDEE). The span at 404–417 (QEARKPESEWAREE) shows a compositional bias: basic and acidic residues. Residues 448 to 479 (AQSVDKFEDEAERLKTEMLLAKLNEINKELQD) are a coiled coil. Residues 496-505 (SKLHSPDRST) show a composition bias toward basic and acidic residues. The segment covering 570-591 (GKSNPPSQKSSLLDFQSNSSES) has biased composition (polar residues). The span at 592–608 (PSKDSLDLMSRKEKKAT) shows a compositional bias: basic and acidic residues. Low complexity predominate over residues 617–627 (SASNTSVSSKS).

This sequence belongs to the LCA5 family. In terms of assembly, interacts with NINL. Interacts with OFD1. Interacts with FAM161A. Interacts with components of the IFT complex B. In terms of tissue distribution, detected in several tissues.

The protein resides in the cytoplasm. The protein localises to the cytoskeleton. It is found in the cilium axoneme. Its subcellular location is the cilium basal body. It localises to the cell projection. The protein resides in the cilium. In terms of biological role, involved in intraflagellar protein (IFT) transport in photoreceptor cilia. In Mus musculus (Mouse), this protein is Lebercilin (Lca5).